An 895-amino-acid polypeptide reads, in one-letter code: Protein translocase subunit SecA (895 aa).

Residues Gln-89, 107 to 111, and Asp-502 each bind ATP; that span reads GEGKT. 2 disordered regions span residues 560–579 and 848–884; these read RRID…PGRT and AAPA…CGSG. Zn(2+)-binding residues include Cys-879, Cys-881, Cys-890, and His-891.

Belongs to the SecA family. As to quaternary structure, monomer and homodimer. Part of the essential Sec protein translocation apparatus which comprises SecA, SecYEG and auxiliary proteins SecDF-YajC and YidC. Zn(2+) serves as cofactor.

It localises to the cell inner membrane. It is found in the cytoplasm. It carries out the reaction ATP + H2O + cellular proteinSide 1 = ADP + phosphate + cellular proteinSide 2.. In terms of biological role, part of the Sec protein translocase complex. Interacts with the SecYEG preprotein conducting channel. Has a central role in coupling the hydrolysis of ATP to the transfer of proteins into and across the cell membrane, serving both as a receptor for the preprotein-SecB complex and as an ATP-driven molecular motor driving the stepwise translocation of polypeptide chains across the membrane. This Ruegeria sp. (strain TM1040) (Silicibacter sp.) protein is Protein translocase subunit SecA.